A 1657-amino-acid polypeptide reads, in one-letter code: Ras GTPase-activating-like protein IQGAP1 (1657 aa).

Ser-2 is subject to N-acetylserine. Ser-2 bears the Phosphoserine mark. A Calponin-homology (CH) domain is found at 44–159 (LCHLEEAKRW…YCIHALSLYL (116 aa)). Tyr-172 carries the phosphotyrosine modification. Ser-330 is subject to Phosphoserine. Residues 679 to 712 (GDNNSKWVKHWVKGGYYYYHNLETQEGGWDEPPN) form the WW domain. 4 consecutive IQ domains span residues 745 to 774 (NEGL…FLKK), 775 to 804 (QIPA…YLRS), 805 to 834 (HKDE…YFRD), and 835 to 864 (HIND…AEDP). The segment at 956–1274 (GGLKALSKEK…FFQTACDVPE (319 aa)) is C1. Residues 1020 to 1269 (YLLLRLFKTA…QKFRRFFQTA (250 aa)) enclose the Ras-GAP domain. The segment at 1276–1657 (QDKFNVDEYS…FLLNKKFYGK (382 aa)) is C2. The segment at 1410 to 1448 (TPATSEQEAEHQRAMQRRAIRDAKTPDKMKKSKSVKEDS) is disordered. Residues 1417–1448 (EAEHQRAMQRRAIRDAKTPDKMKKSKSVKEDS) are compositionally biased toward basic and acidic residues. The residue at position 1441 (Ser-1441) is a Phosphoserine; by PKC. Phosphoserine; by PKC/PRKCE is present on Ser-1443.

As to quaternary structure, interacts with CDC42; the interaction is demonstrated with IQGAP1 in GTP-bound and in nucleotide-free state. Interacts with RAC1. Does not interact with RHOA. Interacts with TSG101. Interacts with PAK6. Interacts with TMEM14B; this interaction increases IQGAP1 phosphorylation and induces its nuclear translocation. Interacts with SASH1. Interacts with PJVK. Interacts with SLC26A4; this interaction enhances the chloride-bicarbonate exchange activity of SLC26A4. Interacts with SVEP1. Interacts with ILK; the interaction is required for localization of IQGAP to the cell cortex. (Microbial infection) Interacts with ebolavirus vp40. In terms of assembly, (Microbial infection) Interacts with human cytomegalovirus protein UL5. As to quaternary structure, (Microbial infection) Interacts with C.jejuni invasion antigen D (CiaD). Phosphorylation of Ser-1443 by PKC/PRKCE prevents interaction between C1 and C2, allowing binding of nucleotide-free CDC42. Ser-1443 phosphorylation enhances the ability to promote neurite outgrowth. As to expression, expressed in the placenta, lung, and kidney. A lower level expression is seen in the heart, liver, skeletal muscle and pancreas.

It localises to the cell membrane. The protein localises to the nucleus. The protein resides in the cytoplasm. Its subcellular location is the cell cortex. It is found in the apical cell membrane. It localises to the basolateral cell membrane. Plays a crucial role in regulating the dynamics and assembly of the actin cytoskeleton. Recruited to the cell cortex by interaction with ILK which allows it to cooperate with its effector DIAPH1 to locally stabilize microtubules and allow stable insertion of caveolae into the plasma membrane. Binds to activated CDC42 but does not stimulate its GTPase activity. Associates with calmodulin. May promote neurite outgrowth. May play a possible role in cell cycle regulation by contributing to cell cycle progression after DNA replication arrest. This is Ras GTPase-activating-like protein IQGAP1 (IQGAP1) from Homo sapiens (Human).